The primary structure comprises 109 residues: UPF0060 membrane protein RC1_3291 (109 aa).

The next 4 membrane-spanning stretches (helical) occupy residues 4–24 (IATY…FWAW), 31–51 (PLWL…LTRI), 59–79 (AYAA…WLVE), and 88–108 (TLGT…PRGG).

It belongs to the UPF0060 family.

It is found in the cell inner membrane. The polypeptide is UPF0060 membrane protein RC1_3291 (Rhodospirillum centenum (strain ATCC 51521 / SW)).